A 460-amino-acid chain; its full sequence is Chromosomal replication initiator protein DnaA 2 (460 aa).

The interval 1–68 (MRAWEDFLLL…KTSLVNNNGK (68 aa)) is domain I, interacts with DnaA modulators. The tract at residues 68–102 (KLIRVHITSLDKTAPFYKEKQIQQEKTAYFTMQYG) is domain II. A domain III, AAA+ region region spans residues 103–321 (NVNPEMTFGN…DALKLLSKRV (219 aa)). Positions 151, 153, 154, and 155 each coordinate ATP. The interval 322–460 (AYKKLAQQLL…EFFPEEEISC (139 aa)) is domain IV, binds dsDNA.

The protein belongs to the DnaA family. Oligomerizes as a right-handed, spiral filament on DNA at oriC.

It is found in the cytoplasm. Functionally, plays an essential role in the initiation and regulation of chromosomal replication. ATP-DnaA binds to the origin of replication (oriC) to initiate formation of the DNA replication initiation complex once per cell cycle. Binds the DnaA box (a 9 base pair repeat at the origin) and separates the double-stranded (ds)DNA. Forms a right-handed helical filament on oriC DNA; dsDNA binds to the exterior of the filament while single-stranded (ss)DNA is stabiized in the filament's interior. The ATP-DnaA-oriC complex binds and stabilizes one strand of the AT-rich DNA unwinding element (DUE), permitting loading of DNA polymerase. After initiation quickly degrades to an ADP-DnaA complex that is not apt for DNA replication. Binds acidic phospholipids. This is Chromosomal replication initiator protein DnaA 2 from Chlamydia caviae (strain ATCC VR-813 / DSM 19441 / 03DC25 / GPIC) (Chlamydophila caviae).